A 142-amino-acid chain; its full sequence is Hemoglobin subunit alpha-C (142 aa).

Alanine 2 bears the N-acetylalanine mark. The region spanning 2-142 is the Globin domain; sequence ALNCDDKAHI…VSGLLTSKYR (141 aa). Residue histidine 59 participates in O2 binding. Histidine 88 provides a ligand contact to heme b.

The protein belongs to the globin family. As to quaternary structure, heterotetramer of either two alpha-B chains or two alpha-C chains and two beta chains. The two major hemoglobins, B and C, associate upon deoxygenation to form a trimer of tetramers, BC2, that has a much lower affinity for oxygen than either component alone. As to expression, red blood cells.

In terms of biological role, the alpha-C chain is a component of adult hemoglobin C. This is Hemoglobin subunit alpha-C from Aquarana catesbeiana (American bullfrog).